The chain runs to 202 residues: Peptidyl-tRNA hydrolase (202 aa).

A tRNA-binding site is contributed by Y19. Catalysis depends on H24, which acts as the Proton acceptor. TRNA contacts are provided by Y70, N72, and N118.

This sequence belongs to the PTH family. In terms of assembly, monomer.

The protein localises to the cytoplasm. It catalyses the reaction an N-acyl-L-alpha-aminoacyl-tRNA + H2O = an N-acyl-L-amino acid + a tRNA + H(+). Functionally, hydrolyzes ribosome-free peptidyl-tRNAs (with 1 or more amino acids incorporated), which drop off the ribosome during protein synthesis, or as a result of ribosome stalling. In terms of biological role, catalyzes the release of premature peptidyl moieties from peptidyl-tRNA molecules trapped in stalled 50S ribosomal subunits, and thus maintains levels of free tRNAs and 50S ribosomes. This is Peptidyl-tRNA hydrolase from Prochlorococcus marinus (strain NATL2A).